The following is a 464-amino-acid chain: 3-deoxy-D-manno-octulosonic acid transferase (464 aa).

The helical; Signal-anchor transmembrane segment at M2–I22 threads the bilayer. Positions D47 to D93 constitute an RPE1 insert domain. E107 functions as the Proton acceptor in the catalytic mechanism. CMP-binding positions include P311–R312, F352–E354, and N377–E380.

Belongs to the glycosyltransferase group 1 family. Glycosyltransferase 30 subfamily.

It is found in the cell inner membrane. It carries out the reaction lipid IVA (E. coli) + CMP-3-deoxy-beta-D-manno-octulosonate = alpha-Kdo-(2-&gt;6)-lipid IVA (E. coli) + CMP + H(+). Its pathway is bacterial outer membrane biogenesis; LPS core biosynthesis. Functionally, involved in lipopolysaccharide (LPS) biosynthesis. Catalyzes the transfer of 3-deoxy-D-manno-octulosonate (Kdo) residue(s) from CMP-Kdo to lipid IV(A), the tetraacyldisaccharide-1,4'-bisphosphate precursor of lipid A. This Rickettsia conorii (strain ATCC VR-613 / Malish 7) protein is 3-deoxy-D-manno-octulosonic acid transferase (waaA).